A 216-amino-acid chain; its full sequence is Pyrophosphatase PpaX (216 aa).

The active-site Nucleophile is the D9.

This sequence belongs to the HAD-like hydrolase superfamily. PpaX family. Mg(2+) is required as a cofactor.

It catalyses the reaction diphosphate + H2O = 2 phosphate + H(+). Its function is as follows. Hydrolyzes pyrophosphate formed during P-Ser-HPr dephosphorylation by HPrK/P. Might play a role in controlling the intracellular pyrophosphate pool. This is Pyrophosphatase PpaX from Bacillus anthracis (strain A0248).